A 141-amino-acid polypeptide reads, in one-letter code: MAKKVIKMVKLQIPAGKANPAPPVGPALGQAGVNIMGFCKEFNARTADQAGLIIPVEITVFEDRSFTFITKTPPAAVLLKKAAGIESGSGEPNRNKVATVKRDKVREIAETKMPDLNAASVEAAMRMVEGAARSMGIVIED.

The protein belongs to the universal ribosomal protein uL11 family. Part of the ribosomal stalk of the 50S ribosomal subunit. Interacts with L10 and the large rRNA to form the base of the stalk. L10 forms an elongated spine to which L12 dimers bind in a sequential fashion forming a multimeric L10(L12)X complex. In terms of processing, one or more lysine residues are methylated.

Functionally, forms part of the ribosomal stalk which helps the ribosome interact with GTP-bound translation factors. This Bacillus cereus (strain ATCC 14579 / DSM 31 / CCUG 7414 / JCM 2152 / NBRC 15305 / NCIMB 9373 / NCTC 2599 / NRRL B-3711) protein is Large ribosomal subunit protein uL11A.